Reading from the N-terminus, the 667-residue chain is uncharacterized protein (667 aa).

This is an uncharacterized protein from Magallana gigas (Pacific oyster).